A 352-amino-acid polypeptide reads, in one-letter code: Neutral protease 2 (352 aa).

Residues 1–19 (MRVTTLSTALFALASTAVS) form the signal peptide. Residues 20–175 (APTAGSSSPG…TKALSQLTRR (156 aa)) constitute a propeptide that is removed on maturation. 3 disulfides stabilise this stretch: Cys181–Cys253, Cys260–Cys278, and Cys292–Cys352. Position 303 (His303) interacts with Zn(2+). Residue Glu304 is part of the active site. The Zn(2+) site is built by His307 and Asp318.

The protein belongs to the peptidase M35 family. It depends on Zn(2+) as a cofactor.

It catalyses the reaction Preferential cleavage of bonds with hydrophobic residues in P1'. Also 3-Asn-|-Gln-4 and 8-Gly-|-Ser-9 bonds in insulin B chain.. Its function is as follows. Metalloprotease that shows high activities on basic nuclear substrates such as histone and protamine. This chain is Neutral protease 2, found in Aspergillus oryzae (strain ATCC 42149 / RIB 40) (Yellow koji mold).